The sequence spans 210 residues: Large ribosomal subunit protein uL3 (210 aa).

A disordered region spans residues 125–151 (RHGQSRGPMSHGSRYHRRPGSMGPVAP).

Belongs to the universal ribosomal protein uL3 family. As to quaternary structure, part of the 50S ribosomal subunit. Forms a cluster with proteins L14 and L19.

In terms of biological role, one of the primary rRNA binding proteins, it binds directly near the 3'-end of the 23S rRNA, where it nucleates assembly of the 50S subunit. This is Large ribosomal subunit protein uL3 from Bacillus cereus (strain ATCC 14579 / DSM 31 / CCUG 7414 / JCM 2152 / NBRC 15305 / NCIMB 9373 / NCTC 2599 / NRRL B-3711).